The primary structure comprises 633 residues: Acetylcholinesterase (633 aa).

An N-terminal signal peptide occupies residues 1-23 (MKILDALLFPVIFIMFFIHLSIA). Residues cysteine 91 and cysteine 118 are joined by a disulfide bond. 2 N-linked (GlcNAc...) asparagine glycosylation sites follow: asparagine 133 and asparagine 184. Residue serine 225 is the Acyl-ester intermediate of the active site. Cysteine 279 and cysteine 290 form a disulfide bridge. Asparagine 283 carries an N-linked (GlcNAc...) asparagine glycan. Catalysis depends on glutamate 352, which acts as the Charge relay system. Asparagine 368 is a glycosylation site (N-linked (GlcNAc...) asparagine). A disulfide bond links cysteine 427 and cysteine 579. Histidine 494 functions as the Charge relay system in the catalytic mechanism. 2 N-linked (GlcNAc...) asparagine glycosylation sites follow: asparagine 511 and asparagine 591.

This sequence belongs to the type-B carboxylesterase/lipase family.

Its subcellular location is the synapse. The protein resides in the secreted. It is found in the cell membrane. It catalyses the reaction acetylcholine + H2O = choline + acetate + H(+). Functionally, terminates signal transduction at the neuromuscular junction by rapid hydrolysis of the acetylcholine released into the synaptic cleft. In Electrophorus electricus (Electric eel), this protein is Acetylcholinesterase (ache).